We begin with the raw amino-acid sequence, 214 residues long: uncharacterized protein (214 aa).

URF2 product may be involved in the transfer of iron-sulfur clusters to the NADH dehydrogenase complex. It may also be required for the assembly of the NADH dehydrogenase complex. This is an uncharacterized protein from Paracoccus denitrificans.